The following is a 205-amino-acid chain: Probable GTP-binding protein EngB (205 aa).

In terms of domain architecture, EngB-type G spans 29–203; sequence QGAEIAFIGR…KAVLSQWFRS (175 aa). GTP-binding positions include 37 to 44, 64 to 68, 82 to 85, 149 to 152, and 182 to 184; these read GRSNAGKS, GRTQM, DLPG, TKSD, and FSS. Mg(2+) contacts are provided by S44 and T66.

Belongs to the TRAFAC class TrmE-Era-EngA-EngB-Septin-like GTPase superfamily. EngB GTPase family. It depends on Mg(2+) as a cofactor.

In terms of biological role, necessary for normal cell division and for the maintenance of normal septation. The protein is Probable GTP-binding protein EngB of Coxiella burnetii (strain CbuG_Q212) (Coxiella burnetii (strain Q212)).